We begin with the raw amino-acid sequence, 339 residues long: Fructose-1,6-bisphosphatase class 1 (339 aa).

Residues Glu92, Asp114, Leu116, and Asp117 each contribute to the Mg(2+) site. Substrate-binding positions include Asp117 to Ser120, Asn213, and Lys279. Mg(2+) is bound at residue Glu285.

This sequence belongs to the FBPase class 1 family. In terms of assembly, homotetramer. Mg(2+) is required as a cofactor.

It is found in the cytoplasm. The catalysed reaction is beta-D-fructose 1,6-bisphosphate + H2O = beta-D-fructose 6-phosphate + phosphate. It functions in the pathway carbohydrate biosynthesis; gluconeogenesis. This is Fructose-1,6-bisphosphatase class 1 from Acidovorax sp. (strain JS42).